Here is a 211-residue protein sequence, read N- to C-terminus: Protein-L-isoaspartate O-methyltransferase (211 aa).

Ser-60 is a catalytic residue.

The protein belongs to the methyltransferase superfamily. L-isoaspartyl/D-aspartyl protein methyltransferase family.

It is found in the cytoplasm. The catalysed reaction is [protein]-L-isoaspartate + S-adenosyl-L-methionine = [protein]-L-isoaspartate alpha-methyl ester + S-adenosyl-L-homocysteine. In terms of biological role, catalyzes the methyl esterification of L-isoaspartyl residues in peptides and proteins that result from spontaneous decomposition of normal L-aspartyl and L-asparaginyl residues. It plays a role in the repair and/or degradation of damaged proteins. The sequence is that of Protein-L-isoaspartate O-methyltransferase from Alteromonas mediterranea (strain DSM 17117 / CIP 110805 / LMG 28347 / Deep ecotype).